A 365-amino-acid chain; its full sequence is Succinyl-diaminopimelate desuccinylase (365 aa).

Histidine 65 lines the Zn(2+) pocket. Aspartate 67 is an active-site residue. A Zn(2+)-binding site is contributed by aspartate 96. Glutamate 126 serves as the catalytic Proton acceptor. Positions 127, 155, and 340 each coordinate Zn(2+).

Belongs to the peptidase M20A family. DapE subfamily. Homodimer. The cofactor is Zn(2+). Requires Co(2+) as cofactor.

It catalyses the reaction N-succinyl-(2S,6S)-2,6-diaminopimelate + H2O = (2S,6S)-2,6-diaminopimelate + succinate. It functions in the pathway amino-acid biosynthesis; L-lysine biosynthesis via DAP pathway; LL-2,6-diaminopimelate from (S)-tetrahydrodipicolinate (succinylase route): step 3/3. Functionally, catalyzes the hydrolysis of N-succinyl-L,L-diaminopimelic acid (SDAP), forming succinate and LL-2,6-diaminopimelate (DAP), an intermediate involved in the bacterial biosynthesis of lysine and meso-diaminopimelic acid, an essential component of bacterial cell walls. This Campylobacter jejuni subsp. jejuni serotype O:23/36 (strain 81-176) protein is Succinyl-diaminopimelate desuccinylase.